A 240-amino-acid chain; its full sequence is RxLR effector protein PexRD20 (240 aa).

Positions 1 to 23 (MRCHYFVLLAVAAFLAGANVAVA) are cleaved as a signal peptide. The RxLR-dEER signature appears at 43-58 (RALRSHTKATDHGEER).

The protein belongs to the RxLR effector family.

The protein resides in the secreted. Its subcellular location is the host cytoplasm. It localises to the host nucleus. It is found in the host nucleolus. Functionally, effector that enhances P.infestans colonization of Nicotiana benthamiana leaves. This chain is RxLR effector protein PexRD20, found in Phytophthora infestans (strain T30-4) (Potato late blight agent).